The primary structure comprises 402 residues: Fugralins biosynthesis cluster protein 2 (402 aa).

The next 5 helical transmembrane spans lie at N28–L48, I109–V129, I145–V165, V232–V252, and L264–V284. Disordered stretches follow at residues N312 to K335 and T378 to V402. Polar residues predominate over residues T324 to P334. N-linked (GlcNAc...) asparagine glycosylation is present at N381.

This sequence belongs to the SAT4 family.

Its subcellular location is the membrane. It functions in the pathway secondary metabolite biosynthesis. In terms of biological role, part of the gene cluster that mediates the biosynthesis of the tetraketides fugralins such as linear fugralin A and cyclic fugralin B, volatile compounds that play a role in the asexual reproductive cycle but are not involved in pathogenicity. One of the key features of fugralins is the presence of a double methyl group, which is only rarely encountered in fungal secondary metabolites. As the fugralins cluster does not contain an independent methyltransferase, the PKS FGR1 is probably responsible for adding two methyl groups to the same carbon atom. Fugralin B is similar to fugralin A except for a cyclization between the carboxylic acid C-8 and the alcohol on C-4 resulting in a six membered lactone ring, probably catalyzed by the cyclase FGR4. The exact role of the individual cluster genes remains unknown and further work is needed to unravel the biosynthetic pathway. In Gibberella zeae (strain ATCC MYA-4620 / CBS 123657 / FGSC 9075 / NRRL 31084 / PH-1) (Wheat head blight fungus), this protein is Fugralins biosynthesis cluster protein 2.